A 553-amino-acid chain; its full sequence is Ergothioneine transport permease/ergothioneine binding protein EgtU (553 aa).

Residues 57–236 (LAQHFIIVAL…LFSVLADKFV (180 aa)) enclose the ABC transmembrane type-1 domain. 6 helical membrane-spanning segments follow: residues 61-81 (FIIVALSGFLVLVFGVLIGVF), 98-118 (FLYTIPSLALFALFIPVIGVG), 122-142 (ALLVLVLYGLLPIVYSTYNAL), 182-202 (IAVVMLVAMAGIGALIGAGGL), 219-239 (VAGSLIIALFSVLADKFVSVF), and 261-281 (VYTNLAVFLFLLLASALWLIP). The Periplasmic segment spans residues 282–553 (RNAIEEKPLV…AKDFLERLGL (272 aa)). Residues 288–549 (KPLVVATKPS…PKIVAKDFLE (262 aa)) form an ergothioneine binding domain region.

In the N-terminal section; belongs to the binding-protein-dependent transport system permease family. This sequence in the C-terminal section; belongs to the OsmX family. In terms of assembly, the complex is composed of two ATP-binding proteins (EgtV) and two transmembrane proteins (EgtU).

It localises to the cell inner membrane. Functionally, part of the ABC transporter complex EgtUV involved in the uptake of ergothioneine (EGT), a natural low-molecular weight (LMW) thiol antioxidant which protects H.pylori against bleach stress. Responsible for the translocation of the substrate across the membrane. Also contains a C-terminal periplasmic solute-binding domain (SBD) which binds to ergothioneine with low-micromolar affinity. Cannot bind the structurally similar compounds glycine betaine, choline, proline, carnitine or histidine. This is Ergothioneine transport permease/ergothioneine binding protein EgtU from Helicobacter pylori (strain G27).